The sequence spans 366 residues: ATP-dependent 6-phosphofructokinase 2 (366 aa).

ATP-binding positions include Gly15, 78 to 79 (KD), and 119 to 122 (GDGT). Asp120 lines the Mg(2+) pocket. Substrate is bound by residues 142–144 (TID), Arg179, 186–188 (MGR), Glu239, Arg284, and 290–293 (HIQR). The active-site Proton acceptor is Asp144.

This sequence belongs to the phosphofructokinase type A (PFKA) family. Mixed-substrate PFK group III subfamily. As to quaternary structure, homodimer or homotetramer. Requires Mg(2+) as cofactor.

The protein resides in the cytoplasm. The enzyme catalyses beta-D-fructose 6-phosphate + ATP = beta-D-fructose 1,6-bisphosphate + ADP + H(+). The protein operates within carbohydrate degradation; glycolysis; D-glyceraldehyde 3-phosphate and glycerone phosphate from D-glucose: step 3/4. With respect to regulation, subject to allosteric activation by ADP and other diphosphonucleosides, and inhibition by phosphoenolpyruvate. Its function is as follows. Catalyzes the phosphorylation of D-fructose 6-phosphate to fructose 1,6-bisphosphate by ATP, the first committing step of glycolysis. In Clostridium perfringens (strain 13 / Type A), this protein is ATP-dependent 6-phosphofructokinase 2.